The sequence spans 82 residues: U17-hexatoxin-Hi1a (82 aa).

The signal sequence occupies residues 1–21; the sequence is MKTIFAVTLLLFAIYVPECMP. 5 disulfide bridges follow: C22–C33, C27–C48, C32–C61, C58–C69, and C63–C75.

Expressed by the venom gland.

The protein localises to the secreted. Probable ion channel inhibitor. The polypeptide is U17-hexatoxin-Hi1a (Hadronyche infensa (Fraser island funnel-web spider)).